The following is a 309-amino-acid chain: Mitochondrial import receptor subunit TOM34 (309 aa).

S8 carries the post-translational modification Phosphoserine. 3 TPR repeats span residues 9-42 (VEELRAAGNESFRNGQYAEASALYGRALRVLQAQ), 51-84 (SVLYSNRAACHLKDGNCRDCIKDCTSALALVPFS), and 86-118 (KPLLRRASAYEALEKYPMAYVDYKTVLQIDDNV). The residue at position 160 (S160) is a Phosphoserine. Positions 161 to 189 (LPSENHKEMAKSKSKETTATKNRVPSAGD) are disordered. Over residues 164–178 (ENHKEMAKSKSKETT) the composition is skewed to basic and acidic residues. Position 186 is a phosphoserine (S186). TPR repeat units lie at residues 193–226 (ARVLKEEGNELVKKGNHKKAIEKYSESLLCSNLE), 227–260 (SATYSNRALCYLVLKQYTEAVKDCTEALKLDGKN), and 262–294 (KAFYRRAQAHKALKDYKSSFADISNLLQIEPRN). K197 is covalently cross-linked (Glycyl lysine isopeptide (Lys-Gly) (interchain with G-Cter in SUMO2)).

It belongs to the Tom34 family. Interacts with HSP90A, VCP, ATP6V1D, KIAA0665, AMPK, and DMAP1 through its TPR repeat. As to expression, ubiquitous.

It is found in the cytoplasm. The protein localises to the mitochondrion outer membrane. Plays a role in the import of cytosolically synthesized preproteins into mitochondria. Binds the mature portion of precursor proteins. Interacts with cellular components, and possesses weak ATPase activity. May be a chaperone-like protein that helps to keep newly synthesized precursors in an unfolded import compatible state. The chain is Mitochondrial import receptor subunit TOM34 (TOMM34) from Homo sapiens (Human).